Consider the following 733-residue polypeptide: 2'-5'-oligoadenylate synthase 2 (733 aa).

Gly-2 carries N-myristoyl glycine lipidation. OAS domain stretches follow at residues 47–365 and 373–713; these read VPSQ…CWDV and TPSH…WKVP. The residue at position 408 (Lys-408) is an N6-acetyllysine. Ser-427 lines the ATP pocket. The Mg(2+) site is built by Asp-439, Asp-441, and Asp-510. ATP-binding residues include Arg-574 and Lys-577.

Belongs to the 2-5A synthase family. As to quaternary structure, homodimer. Requires Mg(2+) as cofactor. In terms of processing, myristoylation is not essential for its activity. Glycosylated. Glycosylation is essential for its activity.

It localises to the cytoplasm. The protein localises to the perinuclear region. It carries out the reaction 3 ATP = 5'-triphosphoadenylyl-(2'-&gt;5')-adenylyl-(2'-&gt;5')-adenosine + 2 diphosphate. Its activity is regulated as follows. Produced as a latent enzyme which is activated by double stranded RNA (dsRNA) generated during the course of viral infection. The dsRNA activator must be at least 15 nucleotides long, and no modification of the 2'-hydroxyl group is tolerated. ssRNA or dsDNA do not act as activators. Strongly inhibited by copper, iron and zinc ions. Partially inhibited by cobalt and nickel ions. Functionally, interferon-induced, dsRNA-activated antiviral enzyme which plays a critical role in cellular innate antiviral response. Activated by detection of double stranded RNA (dsRNA): polymerizes higher oligomers of 2'-5'-oligoadenylates (2-5A) from ATP which then bind to the inactive monomeric form of ribonuclease L (RNASEL) leading to its dimerization and subsequent activation. Activation of RNASEL leads to degradation of cellular as well as viral RNA, resulting in the inhibition of protein synthesis, thus terminating viral replication. Can mediate the antiviral effect via the classical RNASEL-dependent pathway or an alternative antiviral pathway independent of RNASEL. In addition, it may also play a role in other cellular processes such as apoptosis, cell growth, differentiation and gene regulation. May act as a negative regulator of lactation, stopping lactation in virally infected mammary gland lobules, thereby preventing transmission of viruses to neonates. Non-infected lobules would not be affected, allowing efficient pup feeding during infection. The polypeptide is 2'-5'-oligoadenylate synthase 2 (Oas2) (Rattus norvegicus (Rat)).